Reading from the N-terminus, the 230-residue chain is Voltage-gated hydrogen channel 1 (230 aa).

Residues 1–58 lie on the Cytoplasmic side of the membrane; sequence MAGCLRHFTSVGDDTKKREWKQEDVEVAYEEPLKNTPHPFIASYSFRGALKWLLSSHK. The chain crosses the membrane as a helical span at residues 59 to 79; that stretch reads FQIVIICLVILDALFVLVEVL. Over 80-96 the chain is Extracellular; sequence LDLELLAEKVDHIIPEI. Residues 97-119 form a helical membrane-spanning segment; the sequence is FHYLSISVLTFFILEIAGKLYAF. The Cytoplasmic portion of the chain corresponds to 120-127; that stretch reads RLEFFHHK. The chain crosses the membrane as a helical span at residues 128-148; it reads FEVFDAAIVVISFIIDIVYIS. Residues 149-155 lie on the Extracellular side of the membrane; sequence REDIFNA. Residues 156–176 traverse the membrane as a helical segment; it reads VGLLILLRLWRVARIVNGVIV. At 177 to 230 the chain is on the cytoplasmic side; it reads SVKTRAEEKMHKLKEQKGSLLEKVAQLEQQCAQQEQEIGRLHKLLQEHNVFPAS. The stretch at 178-225 forms a coiled coil; it reads VKTRAEEKMHKLKEQKGSLLEKVAQLEQQCAQQEQEIGRLHKLLQEHN.

The protein belongs to the hydrogen channel family. In terms of assembly, homodimer.

Its subcellular location is the membrane. The protein resides in the cell membrane. Its function is as follows. Mediates the voltage-dependent proton permeability of excitable membranes. Forms a proton-selective channel through which protons may pass in accordance with their electrochemical gradient. The protein is Voltage-gated hydrogen channel 1 (hvcn1) of Xenopus laevis (African clawed frog).